Here is a 244-residue protein sequence, read N- to C-terminus: Phosphonates import ATP-binding protein PhnC 2 (244 aa).

The ABC transporter domain occupies 6-244; sequence IECHNLETAY…LQAQFVVNNQ (239 aa). 41–48 is an ATP binding site; the sequence is GLNGAGKS.

It belongs to the ABC transporter superfamily. Phosphonates importer (TC 3.A.1.9.1) family. In terms of assembly, the complex is composed of two ATP-binding proteins (PhnC), two transmembrane proteins (PhnE) and a solute-binding protein (PhnD).

The protein resides in the cell inner membrane. The enzyme catalyses phosphonate(out) + ATP + H2O = phosphonate(in) + ADP + phosphate + H(+). In terms of biological role, part of the ABC transporter complex PhnCDE involved in phosphonates import. Responsible for energy coupling to the transport system. This chain is Phosphonates import ATP-binding protein PhnC 2, found in Nostoc sp. (strain PCC 7120 / SAG 25.82 / UTEX 2576).